Reading from the N-terminus, the 423-residue chain is NADP-specific glutamate dehydrogenase (423 aa).

Residue Lys112 is part of the active site.

It belongs to the Glu/Leu/Phe/Val dehydrogenases family. As to quaternary structure, homohexamer.

It carries out the reaction L-glutamate + NADP(+) + H2O = 2-oxoglutarate + NH4(+) + NADPH + H(+). In Saccharolobus shibatae (strain ATCC 51178 / DSM 5389 / JCM 8931 / NBRC 15437 / B12) (Sulfolobus shibatae), this protein is NADP-specific glutamate dehydrogenase (gdhA).